Consider the following 101-residue polypeptide: Urease subunit beta (101 aa).

Belongs to the urease beta subunit family. In terms of assembly, heterotrimer of UreA (gamma), UreB (beta) and UreC (alpha) subunits. Three heterotrimers associate to form the active enzyme.

It localises to the cytoplasm. The enzyme catalyses urea + 2 H2O + H(+) = hydrogencarbonate + 2 NH4(+). The protein operates within nitrogen metabolism; urea degradation; CO(2) and NH(3) from urea (urease route): step 1/1. The sequence is that of Urease subunit beta from Paraburkholderia phymatum (strain DSM 17167 / CIP 108236 / LMG 21445 / STM815) (Burkholderia phymatum).